The sequence spans 355 residues: MHC class I-like protein MILL2 (355 aa).

The N-terminal stretch at 1 to 29 (MKASSGKPREFRPAVLLLILGLLLRDSRG) is a signal peptide. The alpha-1 stretch occupies residues 46–137 (RLTRTHTLRY…VINQKSQEEG (92 aa)). 3 cysteine pairs are disulfide-bonded: C96–C107, C147–C210, and C249–C306. N-linked (GlcNAc...) asparagine glycosylation is found at N104 and N152. Residues 138 to 229 (LHTLQATLGC…SLRNGLQDTG (92 aa)) form an alpha-2 region. The interval 230–323 (PPMVTVTCRN…SIMQTAVSGH (94 aa)) is alpha-3. One can recognise an Ig-like C1-type domain in the interval 231-321 (PMVTVTCRNY…NHSIMQTAVS (91 aa)). The N-linked (GlcNAc...) asparagine glycan is linked to N312. Positions 324–329 (AAEDSQ) are connecting peptide. A lipid anchor (GPI-anchor amidated aspartate) is attached at D330. Residues 331-355 (VASSATASAGSALPVVLAVALARAN) constitute a propeptide, removed in mature form.

It belongs to the MHC class I family. Heterodimer with B2M (beta-2-microglobulin). In terms of processing, N-glycosylated. Ubiquitously expressed in neonatal and adult tissues.

Its subcellular location is the cell membrane. Its function is as follows. Binds to heparan sulfate proteoglycans on the surface of fibroblast (NIH-3T3) cells. The sequence is that of MHC class I-like protein MILL2 from Mus musculus (Mouse).